A 613-amino-acid chain; its full sequence is ATP-dependent zinc metalloprotease FtsH (613 aa).

Residues 1 to 4 (MVKN) are Cytoplasmic-facing. A helical transmembrane segment spans residues 5–25 (LIFWLVITVVLMSVFQNFNSS). The Extracellular segment spans residues 26–98 (DTSNHRVDYS…VGEIPEEPSL (73 aa)). A helical membrane pass occupies residues 99–119 (LISIFISWFPMLLLIGVWIFF). Residues 120–613 (MRQMQMGGGK…WLEVDQKKDI (494 aa)) are Cytoplasmic-facing. An ATP-binding site is contributed by 192–199 (GPPGTGKT). Position 414 (His-414) interacts with Zn(2+). Glu-415 is a catalytic residue. The Zn(2+) site is built by His-418 and Asp-492.

This sequence in the central section; belongs to the AAA ATPase family. In the C-terminal section; belongs to the peptidase M41 family. As to quaternary structure, homohexamer. Requires Zn(2+) as cofactor.

It localises to the cell membrane. Functionally, acts as a processive, ATP-dependent zinc metallopeptidase for both cytoplasmic and membrane proteins. Plays a role in the quality control of integral membrane proteins. The polypeptide is ATP-dependent zinc metalloprotease FtsH (Buchnera aphidicola subsp. Schizaphis graminum (strain Sg)).